A 358-amino-acid polypeptide reads, in one-letter code: Photosystem II protein D1 (358 aa).

Helical transmembrane passes span 29–46 (YVGWFGVLMIPTLLAATI), 116–131 (HFLIGIFCWLGRQWEL), and 140–154 (WICVAYSAPVAAATS). Position 116 (His116) interacts with chlorophyll a. Trp124 contacts pheophytin a. Asp168 and Glu187 together coordinate [CaMn4O5] cluster. Residues 195–216 (FHQLGVAGVFGGSLFCAMHGSL) form a helical membrane-spanning segment. Residue His196 coordinates chlorophyll a. A quinone-binding positions include His213 and 262 to 263 (SF). Fe cation is bound at residue His213. Residue His270 participates in Fe cation binding. Residues 272-286 (FLAAWPVVCIWFTAL) form a helical membrane-spanning segment. Residues His330, Glu331, Asp340, and Ala342 each coordinate [CaMn4O5] cluster. The propeptide occupies 343 to 358 (AGEVLPIALQSPAING).

The protein belongs to the reaction center PufL/M/PsbA/D family. PSII is composed of 1 copy each of membrane proteins PsbA, PsbB, PsbC, PsbD, PsbE, PsbF, PsbH, PsbI, PsbJ, PsbK, PsbL, PsbM, PsbT, PsbX, PsbY, PsbZ, Psb30/Ycf12, peripheral proteins PsbO, CyanoQ (PsbQ), PsbU, PsbV and a large number of cofactors. It forms dimeric complexes. The D1/D2 heterodimer binds P680, chlorophylls that are the primary electron donor of PSII, and subsequent electron acceptors. It shares a non-heme iron and each subunit binds pheophytin, quinone, additional chlorophylls, carotenoids and lipids. D1 provides most of the ligands for the Mn4-Ca-O5 cluster of the oxygen-evolving complex (OEC). There is also a Cl(-1) ion associated with D1 and D2, which is required for oxygen evolution. The PSII complex binds additional chlorophylls, carotenoids and specific lipids. serves as cofactor. Tyr-159 forms a radical intermediate that is referred to as redox-active TyrZ, YZ or Y-Z. In terms of processing, C-terminally processed by CtpA; processing is essential to allow assembly of the oxygen-evolving complex and thus photosynthetic growth.

The protein localises to the cellular thylakoid membrane. It carries out the reaction 2 a plastoquinone + 4 hnu + 2 H2O = 2 a plastoquinol + O2. Functionally, photosystem II (PSII) is a light-driven water:plastoquinone oxidoreductase that uses light energy to abstract electrons from H(2)O, generating O(2) and a proton gradient subsequently used for ATP formation. It consists of a core antenna complex that captures photons, and an electron transfer chain that converts photonic excitation into a charge separation. The D1/D2 (PsbA/PsbD) reaction center heterodimer binds P680, the primary electron donor of PSII as well as several subsequent electron acceptors. This Mastigocladus laminosus (Fischerella sp.) protein is Photosystem II protein D1.